Consider the following 473-residue polypeptide: MHDNIFLPDAFLAQVQETMPSHLSMDEFIAACKRPLRRSIRVNTLKNSVEEFKQRAAEKQWDLEPVPWCDTGFWITRPESDTVKLGSTAEHMAGLFYIQEASSMMPVTALLKDNDDIEMALDMASAPGSKTTQLAAGMKNQGALVANEFSSSRVKVLCSNIQRCGVSNVALTHFDGRVFGGWLPETFDSILLDAPCSGEGTIRKDPDAMHNWSPESVIEIGDTQRDLIESAFHALKPGGVMVYSTCTLNHEENQNICHHLVEQFGDAVTFKPLGDLFENAEKALTKEGFLHIYPQIFDSEGFFVAKIRKNSSTTPPEVKKRLGKFPFAPASNKEAQAIEAELKSTLQLAIPEDNEFWIRDKEVWAFPKRMKPLIGEMRYHRIGFKLAETHKKGYRWQHEAIMALATADNPTCAELTTEQAREWYMGRDVRPDFSGKGETIVTYKGAVIGLGKWVGNRIKNGLPRELVRDGNLF.

Residues 124–130 (ASAPGSK), E148, D175, and D193 contribute to the S-adenosyl-L-methionine site. C246 (nucleophile) is an active-site residue.

Belongs to the class I-like SAM-binding methyltransferase superfamily. RsmB/NOP family.

The protein resides in the cytoplasm. The enzyme catalyses cytidine(1407) in 16S rRNA + S-adenosyl-L-methionine = 5-methylcytidine(1407) in 16S rRNA + S-adenosyl-L-homocysteine + H(+). Functionally, specifically methylates the cytosine at position 1407 (m5C1407) of 16S rRNA. In Aliivibrio fischeri (strain MJ11) (Vibrio fischeri), this protein is Ribosomal RNA small subunit methyltransferase F.